The following is a 744-amino-acid chain: Cell surface receptor daf-4 (744 aa).

Positions 1–31 are cleaved as a signal peptide; that stretch reads MNQKGTVRLKALVLICLPLFLIATPVPVAVT. At 48–253 the chain is on the extracellular side; the sequence is WANTLVSKVA…IALLILAYVG (206 aa). N-linked (GlcNAc...) asparagine glycosylation is found at asparagine 60, asparagine 134, and asparagine 165. The chain crosses the membrane as a helical span at residues 254–274; the sequence is WKFQQNKKEEIKKQQKIKFDM. Over 275–744 the chain is Cytoplasmic; it reads EKTDALEAGN…PSGTFGTFTT (470 aa). The Protein kinase domain maps to 306-603; sequence ITDFQLISKG…FARVWNHIMS (298 aa). ATP-binding positions include 312–320 and lysine 338; that span reads ISKGRFGKV. The active-site Proton acceptor is the aspartate 440. Disordered stretches follow at residues 605–686 and 724–744; these read PDSS…PEPE and AGAD…TFTT. Residues 620 to 639 show a composition bias toward basic and acidic residues; the sequence is RGVDDVEQSEKPEGIEEMQH. Low complexity predominate over residues 731–744; sequence STPTPSGTFGTFTT.

This sequence belongs to the protein kinase superfamily. TKL Ser/Thr protein kinase family. TGFB receptor subfamily. As to quaternary structure, may interact with daf-1 to regulate dauer larva development. Interacts with sma-10. As to expression, pharynx, intestine, hypodermis and body wall muscles in L1 through to adult stages. Also expressed in head neurons, ventral cord and tail neurons. Subset of head neurons show coexpression with daf-1 when dauer/nondauer decision is made.

The protein localises to the cell membrane. It carries out the reaction L-threonyl-[receptor-protein] + ATP = O-phospho-L-threonyl-[receptor-protein] + ADP + H(+). The catalysed reaction is L-seryl-[receptor-protein] + ATP = O-phospho-L-seryl-[receptor-protein] + ADP + H(+). Functionally, involved in a TGF-beta pathway. May be a receptor for TGF-beta-like ligand daf-7. Controls the decision of whether or not larvae enter a developmentally arrested state, known as dauer, in response to environmental conditions. Regulates body size and male tail patterning. Involved in regulating entry into quiescence triggered by satiety. Involved in sensitivity to CO2 levels. The polypeptide is Cell surface receptor daf-4 (Caenorhabditis elegans).